Consider the following 99-residue polypeptide: Nucleoid-associated protein LACR_0106 (99 aa).

It belongs to the YbaB/EbfC family. As to quaternary structure, homodimer.

It is found in the cytoplasm. It localises to the nucleoid. Functionally, binds to DNA and alters its conformation. May be involved in regulation of gene expression, nucleoid organization and DNA protection. This is Nucleoid-associated protein LACR_0106 from Lactococcus lactis subsp. cremoris (strain SK11).